A 215-amino-acid chain; its full sequence is Uracil phosphoribosyltransferase (215 aa).

30 to 34 (KGMVR) is a GTP binding site. 5-phospho-alpha-D-ribose 1-diphosphate is bound by residues R80, R105, and 139–147 (DPMIATAST). Uracil contacts are provided by residues I202 and 207–209 (GDA). D208 serves as a coordination point for 5-phospho-alpha-D-ribose 1-diphosphate.

Belongs to the UPRTase family. Requires Mg(2+) as cofactor.

It catalyses the reaction UMP + diphosphate = 5-phospho-alpha-D-ribose 1-diphosphate + uracil. It functions in the pathway pyrimidine metabolism; UMP biosynthesis via salvage pathway; UMP from uracil: step 1/1. Its activity is regulated as follows. Allosterically activated by GTP. Its function is as follows. Catalyzes the conversion of uracil and 5-phospho-alpha-D-ribose 1-diphosphate (PRPP) to UMP and diphosphate. This Metallosphaera sedula (strain ATCC 51363 / DSM 5348 / JCM 9185 / NBRC 15509 / TH2) protein is Uracil phosphoribosyltransferase.